A 489-amino-acid polypeptide reads, in one-letter code: Rhamnulokinase (489 aa).

13–17 (ASSGR) contacts ATP. An intrachain disulfide couples Cys-68 to Cys-222. Substrate-binding positions include Gly-83 and 236-238 (HDT). Residue Asp-237 is the Proton acceptor of the active site. Thr-259 contributes to the ATP binding site. Asn-296 is a binding site for substrate. ATP is bound at residue Gln-304. Cys-353 and Cys-370 form a disulfide bridge. An ATP-binding site is contributed by Gly-402. A disulfide bridge links Cys-413 with Cys-417.

This sequence belongs to the rhamnulokinase family. As to quaternary structure, monomer. It depends on Mg(2+) as a cofactor.

It carries out the reaction L-rhamnulose + ATP = L-rhamnulose 1-phosphate + ADP + H(+). Its pathway is carbohydrate degradation; L-rhamnose degradation; glycerone phosphate from L-rhamnose: step 2/3. Involved in the catabolism of L-rhamnose (6-deoxy-L-mannose). Catalyzes the transfer of the gamma-phosphate group from ATP to the 1-hydroxyl group of L-rhamnulose to yield L-rhamnulose 1-phosphate. This is Rhamnulokinase from Escherichia coli (strain SE11).